The sequence spans 149 residues: Aquaporin-like protein 2 (149 aa).

The disordered stretch occupies residues 1-35 (MSNESNDLEKNISHLDPTGVDNAYIPPEQPETKHS). Residues 1-47 (MSNESNDLEKNISHLDPTGVDNAYIPPEQPETKHSRFNIDRDTLRNH) are Cytoplasmic-facing. The chain crosses the membrane as a helical span at residues 48-68 (FIAAVGEFCGTFMFLWCAYVI). Over 69–89 (CNVANHDVALTTEPEGSHPGQ) the chain is Extracellular. A helical transmembrane segment spans residues 90 to 110 (LIMIALGFGFSVMFSIWCFWW). At 111 to 149 (GFEPSRFSLFVFGQSHLTSQMCSDVVSSDHCWDGCWWCR) the chain is on the cytoplasmic side.

The protein belongs to the MIP/aquaporin (TC 1.A.8) family.

The protein localises to the endoplasmic reticulum membrane. It is found in the cell membrane. Its function is as follows. Water channel required to facilitate the transport of water across membranes. Involved in freeze tolerance, osmotolerance and cell flocculation in liquid cultures. Is non-functional in most laboratory strains. The protein is Aquaporin-like protein 2 (AQY2-2) of Saccharomyces cerevisiae (strain JAY291) (Baker's yeast).